Consider the following 737-residue polypeptide: Relaxin receptor 2 (737 aa).

Over 1-399 (MWLLLHVILL…SSSEDLLANG (399 aa)) the chain is Extracellular. The LDL-receptor class A domain maps to 27-64 (LCPKGYFPCGNLTKCLPRAFHCDGVDDCGNGADEDNCG). Intrachain disulfides connect Cys28–Cys41, Cys35–Cys54, and Cys48–Cys63. A glycan (N-linked (GlcNAc...) asparagine) is linked at Asn37. Asn121 carries N-linked (GlcNAc...) asparagine glycosylation. LRR repeat units lie at residues 121 to 142 (NVTL…VFSR), 145 to 166 (ELRK…AFLG), 169 to 190 (NLQI…IFKD), 193 to 214 (QLAW…SFMG), 217 to 238 (SLFF…LCAQ), 241 to 262 (QLNW…TFLT), 265 to 286 (SLTV…TFSS), 289 to 310 (NLGE…LFSD), 313 to 334 (LLQK…QFGS), and 337 to 358 (QLQS…MFQP). N-linked (GlcNAc...) asparagine glycosylation is present at Asn257. Asn318, Asn350, and Asn361 each carry an N-linked (GlcNAc...) asparagine glycan. A helical membrane pass occupies residues 400-420 (ILRVSVWVIAFITCVGNFLVI). The Cytoplasmic segment spans residues 421–438 (AVRSLIKAENTTHAMSIK). A helical membrane pass occupies residues 439 to 459 (ILCCADCLMGVYLFSVGVFDI). The Extracellular portion of the chain corresponds to 460-478 (KYRGQYQKYALLWMESVPC). Cys478 and Cys556 are joined by a disulfide. The chain crosses the membrane as a helical span at residues 479-501 (RLLGFLATLSTEVSVLLLTFLTL). Topologically, residues 502 to 520 (EKFLVIVFPFSNLRLGKRQ) are cytoplasmic. The helical transmembrane segment at 521–541 (TAVALASIWVVGFLIAAVPFT) threads the bilayer. Residues 542-575 (REDYFGNFYGKNGVCFPLHYDQAEDFGSRGYSLG) are Extracellular-facing. The helical transmembrane segment at 576–596 (IFLGVNLLAFLVIVISYVTMF) threads the bilayer. At 597-622 (CSIHKTALQTAEVRSHIGKEVAVANR) the chain is on the cytoplasmic side. A helical transmembrane segment spans residues 623–643 (FFFIVFSDAICWIPVFVVKIL). At 644–653 (SLLQVEIPGT) the chain is on the extracellular side. Residues 654 to 674 (ITSWIVVFFLPVNSALNPILY) form a helical membrane-spanning segment. At 675-737 (TLTTSFFKDK…GDSIMKPVSP (63 aa)) the chain is on the cytoplasmic side.

The protein belongs to the G-protein coupled receptor 1 family. Expressed in embryonic and adult gonads of males and females, as well in male gubernarculum. Expressed also in brain. Not detected in kidney, spleen and heart.

Its subcellular location is the cell membrane. Its function is as follows. Receptor for relaxin. The activity of this receptor is mediated by G proteins leading to stimulation of adenylate cyclase and an increase of cAMP. May also be a receptor for Leydig insulin-like peptide (INSL3). The sequence is that of Relaxin receptor 2 (Rxfp2) from Mus musculus (Mouse).